The sequence spans 173 residues: Ribulose bisphosphate carboxylase small subunit, chloroplastic 3 (173 aa).

The transit peptide at methionine 1–glutamine 49 directs the protein to the chloroplast.

It belongs to the RuBisCO small chain family. As to quaternary structure, heterohexadecamer of 8 large and 8 small subunits.

It localises to the plastid. The protein resides in the chloroplast. In terms of biological role, ruBisCO catalyzes two reactions: the carboxylation of D-ribulose 1,5-bisphosphate, the primary event in carbon dioxide fixation, as well as the oxidative fragmentation of the pentose substrate. Both reactions occur simultaneously and in competition at the same active site. Although the small subunit is not catalytic it is essential for maximal activity. The sequence is that of Ribulose bisphosphate carboxylase small subunit, chloroplastic 3 from Flaveria pringlei.